A 445-amino-acid polypeptide reads, in one-letter code: Enolase (445 aa).

Substrate is bound by residues histidine 165 and glutamate 174. Glutamate 217 serves as the catalytic Proton donor. Aspartate 252, glutamate 303, and aspartate 330 together coordinate Mg(2+). Residues glutamate 303 and aspartate 330 each coordinate substrate. The active-site Proton acceptor is lysine 355. Residues 382–385 (SHRS) and lysine 406 each bind substrate.

Belongs to the enolase family. As to quaternary structure, homodimer. The cofactor is Mg(2+).

It localises to the cytoplasm. It catalyses the reaction (2R)-2-phosphoglycerate = phosphoenolpyruvate + H2O. It participates in carbohydrate degradation; glycolysis; pyruvate from D-glyceraldehyde 3-phosphate: step 4/5. This Eimeria tenella (Coccidian parasite) protein is Enolase (ENO).